The chain runs to 75 residues: Large ribosomal subunit protein bL31 (75 aa).

The protein belongs to the bacterial ribosomal protein bL31 family. Type A subfamily. In terms of assembly, part of the 50S ribosomal subunit.

In terms of biological role, binds the 23S rRNA. This is Large ribosomal subunit protein bL31 from Acidiphilium cryptum (strain JF-5).